The following is a 688-amino-acid chain: DNA topoisomerase 1 (688 aa).

Residues glutamate 3–isoleucine 113 form the Toprim domain. 2 residues coordinate Mg(2+): glutamate 9 and aspartate 82. The 428-residue stretch at glutamate 129–glutamate 556 folds into the Topo IA-type catalytic domain. Residues serine 163–glutamine 168 are interaction with DNA. Tyrosine 298 functions as the O-(5'-phospho-DNA)-tyrosine intermediate in the catalytic mechanism. The tract at residues tyrosine 322–threonine 349 is disordered. Over residues glycine 334–isoleucine 344 the composition is skewed to basic and acidic residues. 3 consecutive C4-type zinc fingers follow at residues cysteine 576–cysteine 602, cysteine 616–cysteine 644, and cysteine 657–cysteine 680.

This sequence belongs to the type IA topoisomerase family. In terms of assembly, monomer. The cofactor is Mg(2+).

The enzyme catalyses ATP-independent breakage of single-stranded DNA, followed by passage and rejoining.. Releases the supercoiling and torsional tension of DNA, which is introduced during the DNA replication and transcription, by transiently cleaving and rejoining one strand of the DNA duplex. Introduces a single-strand break via transesterification at a target site in duplex DNA. The scissile phosphodiester is attacked by the catalytic tyrosine of the enzyme, resulting in the formation of a DNA-(5'-phosphotyrosyl)-enzyme intermediate and the expulsion of a 3'-OH DNA strand. The free DNA strand then undergoes passage around the unbroken strand, thus removing DNA supercoils. Finally, in the religation step, the DNA 3'-OH attacks the covalent intermediate to expel the active-site tyrosine and restore the DNA phosphodiester backbone. The sequence is that of DNA topoisomerase 1 from Staphylococcus saprophyticus subsp. saprophyticus (strain ATCC 15305 / DSM 20229 / NCIMB 8711 / NCTC 7292 / S-41).